The following is a 273-amino-acid chain: Galactose-binding lectin (273 aa).

The first 23 residues, 1-23 (MKPFCVFLTFFLLLAASSKKVDS), serve as a signal peptide directing secretion. Glu-144 and Asp-146 together coordinate Mn(2+). Ca(2+) is bound by residues Asp-146, Tyr-148, Asn-150, and Asp-155. Residues Asp-155 and His-160 each contribute to the Mn(2+) site.

It belongs to the leguminous lectin family. In terms of assembly, homotetramer.

Functionally, D-galactose specific lectin. The protein is Galactose-binding lectin of Arachis hypogaea (Peanut).